Reading from the N-terminus, the 299-residue chain is Ficolin-3 (299 aa).

The signal sequence occupies residues Met-1–Thr-23. The segment at Pro-44 to Val-81 is disordered. The Collagen-like domain occupies Gly-48–Pro-80. Pro-50, Pro-53, Pro-59, Pro-65, Pro-68, and Pro-77 each carry hydroxyproline. The segment covering Pro-61 to Lys-70 has biased composition (pro residues). One can recognise a Fibrinogen C-terminal domain in the interval Leu-84–Arg-299. Intrachain disulfides connect Cys-86-Cys-110 and Cys-93-Cys-121. N-linked (GlcNAc...) (complex) asparagine glycosylation is present at Asn-189. Ca(2+) contacts are provided by Asp-237, Asp-239, Ser-241, and Ser-243. The cysteines at positions 245 and 258 are disulfide-linked. Cys-258 to Tyr-259 contacts a carbohydrate.

Belongs to the ficolin lectin family. As to quaternary structure, homotrimer. May form an octadecamer consisting of an elementary trimer unit. Does not interact with fibronectin, elastin or zymosan. Interacts with MASP1 and MASP2. In terms of processing, the N-terminus is blocked. Liver and lung. In liver it is produced by bile duct epithelial cells and hepatocytes. In lung it is produced by both ciliated bronchial epithelial cells and type II alveolar epithelial cells.

It is found in the secreted. In terms of biological role, may function in innate immunity through activation of the lectin complement pathway. Calcium-dependent and GlcNAc-binding lectin. Has affinity with GalNAc, GlcNAc, D-fucose, as mono/oligosaccharide and lipopolysaccharides from S.typhimurium and S.minnesota. The sequence is that of Ficolin-3 (FCN3) from Homo sapiens (Human).